Here is a 263-residue protein sequence, read N- to C-terminus: Proteasome subunit alpha type-1 (263 aa).

Met-1 is subject to N-acetylmethionine. Ser-110 bears the Phosphoserine; alternate mark. The O-linked (GlcNAc) serine; alternate glycan is linked to Ser-110. A Glycyl lysine isopeptide (Lys-Gly) (interchain with G-Cter in ubiquitin) cross-link involves residue Lys-115. At Ser-177 the chain carries Phosphoserine. Lys-208 is covalently cross-linked (Glycyl lysine isopeptide (Lys-Gly) (interchain with G-Cter in ubiquitin)). The tract at residues 232–263 (FLEGLEERPQRKAQPAQPADEPAEKADEPMEH) is disordered. Positions 253 to 263 (PAEKADEPMEH) are enriched in basic and acidic residues.

It belongs to the peptidase T1A family. The 26S proteasome consists of a 20S proteasome core and two 19S regulatory subunits. The 20S proteasome core is a barrel-shaped complex made of 28 subunits that are arranged in four stacked rings. The two outer rings are each formed by seven alpha subunits, and the two inner rings are formed by seven beta subunits. The proteolytic activity is exerted by three beta-subunits PSMB5, PSMB6 and PSMB7. Interacts with NOTCH3. Interacts with ZFAND1.

The protein localises to the cytoplasm. It localises to the nucleus. Component of the 20S core proteasome complex involved in the proteolytic degradation of most intracellular proteins. This complex plays numerous essential roles within the cell by associating with different regulatory particles. Associated with two 19S regulatory particles, forms the 26S proteasome and thus participates in the ATP-dependent degradation of ubiquitinated proteins. The 26S proteasome plays a key role in the maintenance of protein homeostasis by removing misfolded or damaged proteins that could impair cellular functions, and by removing proteins whose functions are no longer required. Associated with the PA200 or PA28, the 20S proteasome mediates ubiquitin-independent protein degradation. This type of proteolysis is required in several pathways including spermatogenesis (20S-PA200 complex) or generation of a subset of MHC class I-presented antigenic peptides (20S-PA28 complex). In Homo sapiens (Human), this protein is Proteasome subunit alpha type-1.